The following is a 113-amino-acid chain: Bactofilin BacN (113 aa).

It belongs to the bactofilin family. As to quaternary structure, interacts with BacO and BacP, the 3 proteins colocalize as an extended structure.

Its subcellular location is the cytoplasm. The protein resides in the cytoskeleton. Functionally, a non-essential component of the chromosome segregation machinery. Positions the ParA-ParB-parS chromosome segregation machinery within the cell; BacP seems to be the most important bactofilin in this process. Forms a heteropolymeric, subpolar scaffold in the cell; BacP probably forms the core, BacO contributes to position and integrity while BacN does not seem to contribute to assembly. This chain is Bactofilin BacN, found in Myxococcus xanthus (strain DK1622).